We begin with the raw amino-acid sequence, 206 residues long: Tumor protein D54 (206 aa).

N-acetylmethionine is present on Met-1. Polar residues predominate over residues 1-14 (MDSAGQDINLNSPN). Residues 1–24 (MDSAGQDINLNSPNKGLLSDSMTD) form a disordered region. Ser-3, Ser-12, Ser-19, and Ser-21 each carry phosphoserine. Residues 38 to 82 (VEGLTEAEEEELRAELTKVEEEIVTLRQVLAAKERHCGELKRRLG) adopt a coiled-coil conformation. Phosphoserine is present on residues Ser-96, Ser-149, and Ser-161. At Thr-163 the chain carries Phosphothreonine. Residue Ser-166 is modified to Phosphoserine. Thr-173 is subject to Phosphothreonine. Residues 175 to 185 (KSKVVGDRENG) are compositionally biased toward basic and acidic residues. Residues 175–206 (KSKVVGDRENGSDSLPSSAGSGDKPLSDPAPF) form a disordered region. Residues Ser-192 and Ser-195 each carry the phosphoserine modification.

The protein belongs to the TPD52 family. As to quaternary structure, forms a homodimer or heterodimer with other members of the family. Interacts with MAL2.

The sequence is that of Tumor protein D54 (TPD52L2) from Pongo abelii (Sumatran orangutan).